The chain runs to 336 residues: uncharacterized protein (336 aa).

Residue 29–36 participates in ATP binding; sequence GPKSSGKS.

This sequence belongs to the archaeal ATPase family.

This is an uncharacterized protein from Methanocaldococcus jannaschii (strain ATCC 43067 / DSM 2661 / JAL-1 / JCM 10045 / NBRC 100440) (Methanococcus jannaschii).